An 885-amino-acid polypeptide reads, in one-letter code: Alanine--tRNA ligase (885 aa).

Residues H564, H568, C676, and H680 each contribute to the Zn(2+) site.

Belongs to the class-II aminoacyl-tRNA synthetase family. It depends on Zn(2+) as a cofactor.

The protein resides in the cytoplasm. The catalysed reaction is tRNA(Ala) + L-alanine + ATP = L-alanyl-tRNA(Ala) + AMP + diphosphate. Catalyzes the attachment of alanine to tRNA(Ala) in a two-step reaction: alanine is first activated by ATP to form Ala-AMP and then transferred to the acceptor end of tRNA(Ala). Also edits incorrectly charged Ser-tRNA(Ala) and Gly-tRNA(Ala) via its editing domain. This Brucella abortus (strain 2308) protein is Alanine--tRNA ligase.